We begin with the raw amino-acid sequence, 296 residues long: Ribosomal RNA small subunit methyltransferase H (296 aa).

S-adenosyl-L-methionine contacts are provided by residues 30–32 (GGH), D49, F76, D97, and Q104.

It belongs to the methyltransferase superfamily. RsmH family.

It is found in the cytoplasm. It carries out the reaction cytidine(1402) in 16S rRNA + S-adenosyl-L-methionine = N(4)-methylcytidine(1402) in 16S rRNA + S-adenosyl-L-homocysteine + H(+). Its function is as follows. Specifically methylates the N4 position of cytidine in position 1402 (C1402) of 16S rRNA. The protein is Ribosomal RNA small subunit methyltransferase H of Mesomycoplasma hyopneumoniae (strain 232) (Mycoplasma hyopneumoniae).